The sequence spans 146 residues: Histone H2B (146 aa).

A compositionally biased stretch (basic and acidic residues) spans 1-16 (MAPRADKKPAEKKPGA). The segment at 1 to 52 (MAPRADKKPAEKKPGAEKTPVAEKAPAEKKPRAGKKLPRDAGAAGDKKKKRA) is disordered. Residues lysine 7, lysine 35, and lysine 36 each carry the N6-acetyllysine modification. Lysine 142 participates in a covalent cross-link: Glycyl lysine isopeptide (Lys-Gly) (interchain with G-Cter in ubiquitin).

This sequence belongs to the histone H2B family. The nucleosome is a histone octamer containing two molecules each of H2A, H2B, H3 and H4 assembled in one H3-H4 heterotetramer and two H2A-H2B heterodimers. The octamer wraps approximately 147 bp of DNA. In terms of processing, can be acetylated to form H2BK6ac, H2BK33ac and H2BK34ac. Monoubiquitinated to form H2BK143ub1; may give a specific tag for epigenetic transcriptional activation.

The protein localises to the nucleus. Its subcellular location is the chromosome. Its function is as follows. Core component of nucleosome. Nucleosomes wrap and compact DNA into chromatin, limiting DNA accessibility to the cellular machineries which require DNA as a template. Histones thereby play a central role in transcription regulation, DNA repair, DNA replication and chromosomal stability. DNA accessibility is regulated via a complex set of post-translational modifications of histones, also called histone code, and nucleosome remodeling. In Nicotiana tabacum (Common tobacco), this protein is Histone H2B (HIS2B).